The sequence spans 473 residues: GTPase Der (473 aa).

EngA-type G domains lie at 3–166 (PVIA…ENPE) and 177–350 (IRIG…ESAM). Residues 9-16 (GRPNVGKS), 56-60 (DTGGL), 118-121 (NKTD), 183-190 (GRPNVGKS), 230-234 (DTAGV), and 295-298 (NKWD) contribute to the GTP site. Positions 351–435 (SKWPTNRLTA…PIRFEFKSGE (85 aa)) constitute a KH-like domain. Residues 444–458 (RLTPRQKVKKDNDLK) show a composition bias toward basic and acidic residues. Residues 444–473 (RLTPRQKVKKDNDLKKGRRIKKTRQKSVKR) are disordered. The span at 459-473 (KGRRIKKTRQKSVKR) shows a compositional bias: basic residues.

Belongs to the TRAFAC class TrmE-Era-EngA-EngB-Septin-like GTPase superfamily. EngA (Der) GTPase family. As to quaternary structure, associates with the 50S ribosomal subunit.

In terms of biological role, GTPase that plays an essential role in the late steps of ribosome biogenesis. This Marinobacter nauticus (strain ATCC 700491 / DSM 11845 / VT8) (Marinobacter aquaeolei) protein is GTPase Der.